A 211-amino-acid chain; its full sequence is Probable nicotinate-nucleotide adenylyltransferase (211 aa).

Belongs to the NadD family.

It catalyses the reaction nicotinate beta-D-ribonucleotide + ATP + H(+) = deamido-NAD(+) + diphosphate. Its pathway is cofactor biosynthesis; NAD(+) biosynthesis; deamido-NAD(+) from nicotinate D-ribonucleotide: step 1/1. Its function is as follows. Catalyzes the reversible adenylation of nicotinate mononucleotide (NaMN) to nicotinic acid adenine dinucleotide (NaAD). In Shewanella sediminis (strain HAW-EB3), this protein is Probable nicotinate-nucleotide adenylyltransferase.